The chain runs to 225 residues: Probable manganese catalase (225 aa).

Glu-37 contributes to the Mn(2+) binding site. Ca(2+)-binding residues include Asp-58 and Asp-62. Residues Glu-67, His-70, Glu-138, and His-171 each contribute to the Mn(2+) site. Ser-204 contributes to the Ca(2+) binding site. Positions 204-225 are disordered; that stretch reads STPGRYVQDPNPTEPSFSNPRR. A compositionally biased stretch (polar residues) spans 213–225; sequence PNPTEPSFSNPRR.

Belongs to the manganese catalase family. Ca(2+) serves as cofactor. It depends on Mn(2+) as a cofactor.

It catalyses the reaction 2 H2O2 = O2 + 2 H2O. In terms of biological role, catalyzes the decomposition of hydrogen peroxide into water and oxygen. The protein is Probable manganese catalase of Clostridium acetobutylicum (strain ATCC 824 / DSM 792 / JCM 1419 / IAM 19013 / LMG 5710 / NBRC 13948 / NRRL B-527 / VKM B-1787 / 2291 / W).